The chain runs to 191 residues: Adenylate kinase (191 aa).

10-15 (GAGKGT) contributes to the ATP binding site. Residues 30-59 (STGDIFRANVTEGTPLGVEAKRYMDAGEYV) form an NMP region. AMP-binding positions include threonine 31, arginine 36, 57 to 59 (EYV), 85 to 88 (GYPR), and glutamine 92. An LID region spans residues 126-136 (QRAQVEGRADD). Arginine 127 serves as a coordination point for ATP. AMP contacts are provided by arginine 133 and arginine 144. Glycine 172 is an ATP binding site.

This sequence belongs to the adenylate kinase family. Monomer.

Its subcellular location is the cytoplasm. The enzyme catalyses AMP + ATP = 2 ADP. The protein operates within purine metabolism; AMP biosynthesis via salvage pathway; AMP from ADP: step 1/1. In terms of biological role, catalyzes the reversible transfer of the terminal phosphate group between ATP and AMP. Plays an important role in cellular energy homeostasis and in adenine nucleotide metabolism. This is Adenylate kinase from Nocardioides sp. (strain ATCC BAA-499 / JS614).